A 348-amino-acid polypeptide reads, in one-letter code: MSLIPYALTRPFLFGMDPESAHDLTMNLMAKGQNTLLQQAWAQPMVSDPVELAGLKFPNRVGMAAGLDKNARCIDALAAMGFGFVEVGTVTPRPQPGNPKPRMFRIPERNALINRLGFNNEGLDAFLSNVKRSQARAQGKPMLLGLNIGKNATTPIEDATSDYLKALDGVYPHADYVTVNISSPNTKNLRALQSDEALDALLGAIAERREQLATQHGKRVPVFVKIAPDLDEEQVGVIAATLQRHGMDGVIATNTTISREAVKGLPYAQETGGLSGAPVLEASNQVIRQLRSALGSRYPIIGVGGILSGEDAVSKIRAGADVVQIYSGLIYRGPALVPETARAIAQLR.

FMN is bound by residues 65-69 (AGLDK) and threonine 89. Lysine 69 contacts substrate. 114–118 (NRLGF) lines the substrate pocket. FMN contacts are provided by asparagine 147 and asparagine 180. Asparagine 180 lines the substrate pocket. The active-site Nucleophile is serine 183. Asparagine 185 is a substrate binding site. Residues lysine 225 and threonine 253 each coordinate FMN. 254–255 (NT) provides a ligand contact to substrate. Residues glycine 276, glycine 305, and 326-327 (YS) each bind FMN.

It belongs to the dihydroorotate dehydrogenase family. Type 2 subfamily. In terms of assembly, monomer. FMN is required as a cofactor.

It is found in the cell membrane. The catalysed reaction is (S)-dihydroorotate + a quinone = orotate + a quinol. It functions in the pathway pyrimidine metabolism; UMP biosynthesis via de novo pathway; orotate from (S)-dihydroorotate (quinone route): step 1/1. Its function is as follows. Catalyzes the conversion of dihydroorotate to orotate with quinone as electron acceptor. The polypeptide is Dihydroorotate dehydrogenase (quinone) (Delftia acidovorans (strain DSM 14801 / SPH-1)).